Reading from the N-terminus, the 805-residue chain is Chloride channel protein (805 aa).

Topologically, residues 1 to 48 are cytoplasmic; it reads MSHEKNEASGYPEAQSWKSQEAMLGARTEVSRWRAVKNCLYRHLVKVL. 2 helical membrane-spanning segments follow: residues 49–86 and 93–116; these read GEDW…LFAL and LQYL…CQIV. A Selectivity filter part_1 motif is present at residues 122 to 126; sequence GSGIP. Position 123 (Ser123) interacts with chloride. An intramembrane region (helical) is located at residues 125–132; that stretch reads IPELKTII. The next 2 helical transmembrane spans lie at 141–159 and 166–184; these read LTLR…ALSA and EGPF…NQLL. Positions 164–168 match the Selectivity filter part_2 motif; sequence GKEGP. Intramembrane regions (helical) lie at residues 201 to 213 and 217 to 225; these read ILTV…ISCC and PLAGVLFSI. The next 3 membrane-spanning stretches (helical) occupy residues 237–256, 283–311, and 320–339; these read YWRG…VLSV, MPAF…IVFM, and ILKK…LATL. N-linked (GlcNAc...) asparagine glycosylation occurs at Asn365. Transmembrane regions (helical) follow at residues 388-408 and 416-439; these read LNIF…AALA and GAFV…MALL. The Selectivity filter part_3 motif lies at 416 to 420; sequence GAFVP. Phe418 serves as a coordination point for chloride. The segment at residues 456–470 is an intramembrane region (helical); the sequence is GEYAVIGAAAMTGAV. Positions 471-472 form an intramembrane region, note=Loop between two helices; sequence TH. Residues 473 to 484 constitute an intramembrane region (helical); it reads AVSTAVICFELT. Positions 485–489 form an intramembrane region, note=Loop between two helices; sequence GQISH. Residues 490–507 form a helical membrane-spanning segment; the sequence is VLPMMVAVILANMVAQGL. The Cytoplasmic segment spans residues 508-805; that stretch reads QPSLYDSIIQ…RTATSNSSGK (298 aa). Tyr512 contacts chloride. In terms of domain architecture, CBS 1 spans 543–601; the sequence is MVRDVTSIASTSTYGDLLHVLRQTKLKFFPFVDTPDTNTLLGSIDRTEVEGLLQRRISA. 2 disordered regions span residues 606–625 and 653–684; these read PAAA…GASF and KVQT…QKGT. The CBS 2 domain maps to 719–776; it reads IDQSPFQLVEGTSLQKTHTLFSLLGLDRAYVTSMGKLVGVVALAEIQAAIEGSYQKGF.

This sequence belongs to the chloride channel (TC 2.A.49) family. ClC-0 subfamily. Homodimer. Each subunit contains a channel ('Double barreled channel').

It localises to the membrane. In terms of biological role, voltage-gated chloride channel. This channel is thought to ensure the high conductance of the non-innervated membrane of the electrocyte necessary for efficient current generation caused by sodium influx through the acetylcholine receptor at the innervated membrane. This chain is Chloride channel protein, found in Torpedo marmorata (Marbled electric ray).